The chain runs to 333 residues: Holliday junction branch migration complex subunit RuvB (333 aa).

The tract at residues 1 to 182 is large ATPase domain (RuvB-L); that stretch reads MDERLLSGES…FGVLSRLEYY (182 aa). ATP is bound by residues Leu-21, Arg-22, Gly-63, Lys-66, Thr-67, Thr-68, 129 to 131, Arg-172, Tyr-182, and Arg-219; that span reads EDF. Thr-67 serves as a coordination point for Mg(2+). Residues 183–253 are small ATPAse domain (RuvB-S); sequence TVDQLSAIVE…ITQMALELLQ (71 aa). Positions 256–333 are head domain (RuvB-H); that stretch reads KLGLDHIDHK…EHFGMEMPKV (78 aa). The DNA site is built by Arg-311 and Arg-316.

It belongs to the RuvB family. Homohexamer. Forms an RuvA(8)-RuvB(12)-Holliday junction (HJ) complex. HJ DNA is sandwiched between 2 RuvA tetramers; dsDNA enters through RuvA and exits via RuvB. An RuvB hexamer assembles on each DNA strand where it exits the tetramer. Each RuvB hexamer is contacted by two RuvA subunits (via domain III) on 2 adjacent RuvB subunits; this complex drives branch migration. In the full resolvosome a probable DNA-RuvA(4)-RuvB(12)-RuvC(2) complex forms which resolves the HJ.

It localises to the cytoplasm. It catalyses the reaction ATP + H2O = ADP + phosphate + H(+). The RuvA-RuvB-RuvC complex processes Holliday junction (HJ) DNA during genetic recombination and DNA repair, while the RuvA-RuvB complex plays an important role in the rescue of blocked DNA replication forks via replication fork reversal (RFR). RuvA specifically binds to HJ cruciform DNA, conferring on it an open structure. The RuvB hexamer acts as an ATP-dependent pump, pulling dsDNA into and through the RuvAB complex. RuvB forms 2 homohexamers on either side of HJ DNA bound by 1 or 2 RuvA tetramers; 4 subunits per hexamer contact DNA at a time. Coordinated motions by a converter formed by DNA-disengaged RuvB subunits stimulates ATP hydrolysis and nucleotide exchange. Immobilization of the converter enables RuvB to convert the ATP-contained energy into a lever motion, pulling 2 nucleotides of DNA out of the RuvA tetramer per ATP hydrolyzed, thus driving DNA branch migration. The RuvB motors rotate together with the DNA substrate, which together with the progressing nucleotide cycle form the mechanistic basis for DNA recombination by continuous HJ branch migration. Branch migration allows RuvC to scan DNA until it finds its consensus sequence, where it cleaves and resolves cruciform DNA. In Bacillus anthracis (strain A0248), this protein is Holliday junction branch migration complex subunit RuvB.